The primary structure comprises 244 residues: UL16-binding protein 1 (244 aa).

A signal peptide spans 1–25 (MAAAASPAFLLCLPLLHLLSGWSRA). The tract at residues 26–117 (GWVDTHCLCY…IQVENLIPIE (92 aa)) is MHC class I alpha-1 like. Cysteine 50 and cysteine 66 form a disulfide bridge. Residue asparagine 82 is glycosylated (N-linked (GlcNAc...) asparagine). The MHC class I alpha-2 like stretch occupies residues 118 to 208 (PLTLQARMSC…MYWEQMLDPT (91 aa)). A disulfide bridge links cysteine 127 with cysteine 190. Glycine 216 is lipidated: GPI-anchor amidated glycine. Positions 217 to 244 (TTQPKAMATTLSPWSLLIIFLCFILAGR) are cleaved as a propeptide — removed in mature form.

The protein belongs to the MHC class I family. As to quaternary structure, interacts with KLRK1/NKG2D. Does not bind to beta2-microglobulin. (Microbial infection) In CMV-infected cells, interacts with the viral glycoprotein UL16; this interaction causes ULBP1 retention in the endoplasmic reticulum and cis-Golgi and prevents binding to and activation of KLRK1/NKG2D, providing CMV with an immune evasion mechanism. In terms of tissue distribution, expressed in T-cells, B-cells, erythroleukemia cell lines and in a wide range of tissues including heart, brain, lung, liver, testis, lymph node, thymus, tonsil and bone marrow. Also found in fetal heart, brain, lung and liver.

The protein localises to the cell membrane. The protein resides in the endoplasmic reticulum. Functionally, binds and activates the KLRK1/NKG2D receptor, mediating natural killer cell cytotoxicity. This Homo sapiens (Human) protein is UL16-binding protein 1 (ULBP1).